The sequence spans 570 residues: Berberine bridge enzyme-like 19 (570 aa).

The signal sequence occupies residues 1–30 (MLTTPPRTFVSVPFFFFFLLFLSLPLSSFS). Cys42 and Cys105 are joined by a disulfide. Residue Asn80 is glycosylated (N-linked (GlcNAc...) asparagine). The FAD-binding PCMH-type domain maps to 83-257 (STLKPTIIIT…LGYKVKLVPV (175 aa)). The 6-(S-cysteinyl)-8alpha-(pros-histidyl)-FAD (His-Cys) cross-link spans 120–182 (HDYDGLSYIS…RVHGFPAGVC (63 aa)). Residues Asn341 and Asn359 are each glycosylated (N-linked (GlcNAc...) asparagine).

This sequence belongs to the oxygen-dependent FAD-linked oxidoreductase family. Requires FAD as cofactor. The FAD cofactor is bound via a bicovalent 6-S-cysteinyl, 8alpha-N1-histidyl FAD linkage.

Its subcellular location is the secreted. The protein resides in the cell wall. The protein is Berberine bridge enzyme-like 19 of Arabidopsis thaliana (Mouse-ear cress).